We begin with the raw amino-acid sequence, 166 residues long: NAD(P)H-quinone oxidoreductase subunit I, chloroplastic (166 aa).

2 consecutive 4Fe-4S ferredoxin-type domains span residues 55-84 and 95-124; these read GRIH…VDWK and LNYS…MTEE. Residues Cys-64, Cys-67, Cys-70, Cys-74, Cys-104, Cys-107, Cys-110, and Cys-114 each contribute to the [4Fe-4S] cluster site.

This sequence belongs to the complex I 23 kDa subunit family. As to quaternary structure, NDH is composed of at least 16 different subunits, 5 of which are encoded in the nucleus. The cofactor is [4Fe-4S] cluster.

It localises to the plastid. The protein localises to the chloroplast thylakoid membrane. The enzyme catalyses a plastoquinone + NADH + (n+1) H(+)(in) = a plastoquinol + NAD(+) + n H(+)(out). It catalyses the reaction a plastoquinone + NADPH + (n+1) H(+)(in) = a plastoquinol + NADP(+) + n H(+)(out). In terms of biological role, NDH shuttles electrons from NAD(P)H:plastoquinone, via FMN and iron-sulfur (Fe-S) centers, to quinones in the photosynthetic chain and possibly in a chloroplast respiratory chain. The immediate electron acceptor for the enzyme in this species is believed to be plastoquinone. Couples the redox reaction to proton translocation, and thus conserves the redox energy in a proton gradient. This chain is NAD(P)H-quinone oxidoreductase subunit I, chloroplastic, found in Parthenium hysterophorus (Santa Maria feverfew).